A 314-amino-acid chain; its full sequence is MPDMKLFAGNAIPELAQRIADRLYISLGDATVSRFSDGEVAVQINENVRGSDVFIIQSTCAPTNDNLMELVVMIDAMRRASAGRITAVIPYFGYARQDRRVRSARVPITAKVVADFLSNVGVDRVLTIDLHAEQIQGFFDVPVDNIFGTPVLLEDMKARNLEDPVVVSPDLGGVVRARATAKALGDIDIAIVDKRRPRANVSEVMNLIGDVEGRDCVIVDDMIDTGGTLCKAAEALKERGAKRVFAYATHAVFSGNAAKNIKNSVLDQVIVTDSITLSKEMAATGKVTQLTLSSMLAEAIRRISNEESISAMFN.

ATP contacts are provided by residues 37–39 (DGE) and 96–97 (RQ). 2 residues coordinate Mg(2+): histidine 131 and aspartate 170. Lysine 194 is an active-site residue. Residues arginine 196, aspartate 220, and 224-228 (DTGGT) each bind D-ribose 5-phosphate.

The protein belongs to the ribose-phosphate pyrophosphokinase family. Class I subfamily. As to quaternary structure, homohexamer. It depends on Mg(2+) as a cofactor.

The protein resides in the cytoplasm. It catalyses the reaction D-ribose 5-phosphate + ATP = 5-phospho-alpha-D-ribose 1-diphosphate + AMP + H(+). It participates in metabolic intermediate biosynthesis; 5-phospho-alpha-D-ribose 1-diphosphate biosynthesis; 5-phospho-alpha-D-ribose 1-diphosphate from D-ribose 5-phosphate (route I): step 1/1. In terms of biological role, involved in the biosynthesis of the central metabolite phospho-alpha-D-ribosyl-1-pyrophosphate (PRPP) via the transfer of pyrophosphoryl group from ATP to 1-hydroxyl of ribose-5-phosphate (Rib-5-P). In Vibrio cholerae serotype O1 (strain ATCC 39315 / El Tor Inaba N16961), this protein is Ribose-phosphate pyrophosphokinase.